We begin with the raw amino-acid sequence, 97 residues long: Essential MCU regulator, mitochondrial (97 aa).

Residues 1-37 (MAARMGVLSVAGFRAAARAGGLLARPKQSTAVVPCRT) constitute a mitochondrion transit peptide. Residues 38–55 (VIASSAGAILPKPEKVSF) are Mitochondrial matrix-facing. The chain crosses the membrane as a helical span at residues 56–75 (GLLRVFTVVIPFLYIGTLIS). Residues 76 to 97 (KNFAAVLEEHDIFVPEDDDDDD) are Mitochondrial intermembrane-facing.

The protein belongs to the SMDT1/EMRE family. As to quaternary structure, component of the uniplex complex.

Its subcellular location is the mitochondrion inner membrane. Its function is as follows. Essential regulatory subunit of the mitochondrial calcium uniporter complex (uniplex), a complex that mediates calcium uptake into mitochondria. Required to bridge the calcium-sensing proteins micu1 with the calcium-conducting subunit mcu. Acts by mediating activation of mcu and retention of micu1 to the mcu pore, in order to ensure tight regulation of the uniplex complex and appropriate responses to intracellular calcium signaling. The sequence is that of Essential MCU regulator, mitochondrial from Xenopus laevis (African clawed frog).